Consider the following 269-residue polypeptide: Subtilisin BL (269 aa).

Residue glutamine 2 participates in Ca(2+) binding. A Peptidase S8 domain is found at 5–268 (PWGISRVQAP…SGLVNAEAAT (264 aa)). Aspartate 32 serves as the catalytic Charge relay system. Residue aspartate 40 participates in Ca(2+) binding. Histidine 62 functions as the Charge relay system in the catalytic mechanism. Ca(2+) is bound by residues leucine 73, asparagine 75, isoleucine 77, valine 79, alanine 163, tyrosine 165, and alanine 168. The Charge relay system role is filled by serine 215.

It belongs to the peptidase S8 family. Ca(2+) is required as a cofactor.

It localises to the secreted. It carries out the reaction Hydrolysis of proteins with broad specificity for peptide bonds, and a preference for a large uncharged residue in P1. Hydrolyzes peptide amides.. Subtilisin is an extracellular alkaline serine protease, it catalyzes the hydrolysis of proteins and peptide amides. The sequence is that of Subtilisin BL from Lederbergia lenta (Bacillus lentus).